The sequence spans 316 residues: Taste receptor type 2 member 3 (316 aa).

Residues 1–7 are Extracellular-facing; it reads MLGFTEG. A helical membrane pass occupies residues 8–28; it reads IFLVLTVTEFILGNLVNGFIV. The Cytoplasmic segment spans residues 29–50; sequence SVNGSHWFKSKKISLSDFIITS. The chain crosses the membrane as a helical span at residues 51–71; sequence LALFRIFLLWIIFTDSLIIVF. Residues 72–86 lie on the Extracellular side of the membrane; sequence SYHTHDSGIRMQLID. The chain crosses the membrane as a helical span at residues 87–107; it reads VFWTFTNHFSIWLISCLSVFY. The Cytoplasmic portion of the chain corresponds to 108 to 128; the sequence is CLKIATFSHPSFLWLKWRASR. Residues 129-149 traverse the membrane as a helical segment; the sequence is VVVGMLWGALVLSCVCTMSLM. Residues 150–186 lie on the Extracellular side of the membrane; that stretch reads NEFKIYSALTGSRDTQNMTEYIRLKRHEYNLMHVLGN. N-linked (GlcNAc...) asparagine glycosylation occurs at Asn166. Residues 187–207 traverse the membrane as a helical segment; that stretch reads LWKIPSLIVSLIAYFLLLLSL. At 208–234 the chain is on the cytoplasmic side; the sequence is GKHTQQMQKYSVGSRDQSAEAHRRAMR. A helical transmembrane segment spans residues 235–255; that stretch reads IILSFLLFFLFYFLSFVILSS. Topologically, residues 256–266 are extracellular; that stretch reads SRFLPETKIAR. Residues 267-287 traverse the membrane as a helical segment; sequence IIGVVITMSYLVGDSLILILG. Residues 288 to 316 are Cytoplasmic-facing; it reads NNKLKQTFVAILPCECGHPKPGSKRFFAS.

This sequence belongs to the G-protein coupled receptor T2R family.

It is found in the membrane. In terms of biological role, gustducin-coupled receptor implicated in the perception of bitter compounds in the oral cavity and the gastrointestinal tract. Signals through PLCB2 and the calcium-regulated cation channel TRPM5. This chain is Taste receptor type 2 member 3, found in Rattus norvegicus (Rat).